The following is a 63-amino-acid chain: Large ribosomal subunit protein bL28c (63 aa).

The protein belongs to the bacterial ribosomal protein bL28 family.

Its subcellular location is the plastid. It localises to the chloroplast. The polypeptide is Large ribosomal subunit protein bL28c (rpl28) (Porphyra purpurea (Red seaweed)).